The chain runs to 27 residues: GGVGRCIYNCMNSGGGLNFIQCKTMCY.

Intrachain disulfides connect cysteine 6–cysteine 26 and cysteine 10–cysteine 22.

It belongs to the conotoxin L superfamily. In terms of tissue distribution, expressed by the venom duct.

It localises to the secreted. In terms of biological role, in vivo, intracranial injection, elicits scratching and grooming activity in mice. This Conus cancellatus (Cancellate cone) protein is Conotoxin as14a.